Reading from the N-terminus, the 335-residue chain is Glycerol-3-phosphate dehydrogenase [NAD(P)+] (335 aa).

Residues tryptophan 15, arginine 36, and lysine 109 each contribute to the NADPH site. Sn-glycerol 3-phosphate-binding residues include lysine 109, glycine 137, and serine 139. An NADPH-binding site is contributed by alanine 141. Sn-glycerol 3-phosphate-binding residues include lysine 192, aspartate 245, serine 255, arginine 256, and asparagine 257. Residue lysine 192 is the Proton acceptor of the active site. Arginine 256 contributes to the NADPH binding site. The NADPH site is built by leucine 279 and glutamate 281.

The protein belongs to the NAD-dependent glycerol-3-phosphate dehydrogenase family.

The protein resides in the cytoplasm. The catalysed reaction is sn-glycerol 3-phosphate + NAD(+) = dihydroxyacetone phosphate + NADH + H(+). It catalyses the reaction sn-glycerol 3-phosphate + NADP(+) = dihydroxyacetone phosphate + NADPH + H(+). Its pathway is membrane lipid metabolism; glycerophospholipid metabolism. Functionally, catalyzes the reduction of the glycolytic intermediate dihydroxyacetone phosphate (DHAP) to sn-glycerol 3-phosphate (G3P), the key precursor for phospholipid synthesis. This Beijerinckia indica subsp. indica (strain ATCC 9039 / DSM 1715 / NCIMB 8712) protein is Glycerol-3-phosphate dehydrogenase [NAD(P)+].